The sequence spans 177 residues: ATP synthase subunit delta (177 aa).

Belongs to the ATPase delta chain family. As to quaternary structure, F-type ATPases have 2 components, F(1) - the catalytic core - and F(0) - the membrane proton channel. F(1) has five subunits: alpha(3), beta(3), gamma(1), delta(1), epsilon(1). F(0) has three main subunits: a(1), b(2) and c(10-14). The alpha and beta chains form an alternating ring which encloses part of the gamma chain. F(1) is attached to F(0) by a central stalk formed by the gamma and epsilon chains, while a peripheral stalk is formed by the delta and b chains.

It is found in the cell inner membrane. Its function is as follows. F(1)F(0) ATP synthase produces ATP from ADP in the presence of a proton or sodium gradient. F-type ATPases consist of two structural domains, F(1) containing the extramembraneous catalytic core and F(0) containing the membrane proton channel, linked together by a central stalk and a peripheral stalk. During catalysis, ATP synthesis in the catalytic domain of F(1) is coupled via a rotary mechanism of the central stalk subunits to proton translocation. In terms of biological role, this protein is part of the stalk that links CF(0) to CF(1). It either transmits conformational changes from CF(0) to CF(1) or is implicated in proton conduction. This chain is ATP synthase subunit delta, found in Proteus mirabilis (strain HI4320).